Reading from the N-terminus, the 102-residue chain is MAPFQSNKDLISTGIKEFNVLLDQQVFDDPLISEEDMVIVVHDWVNLYTNYYKKLVHGEQEEQDRAMTEFQQELSTLGSQFLAKYRTFLKSKEPPSNTLPSS.

This sequence belongs to the AHSP family. In terms of assembly, monomer. Forms a heterodimer with free alpha-hemoglobin. Does not bind beta-hemoglobin nor alpha(2)beta(2) hemoglobin A. In terms of tissue distribution, expressed in spleen, bone marrow, and blood, with highest levels in bone marrow.

Its subcellular location is the cytoplasm. Its function is as follows. Acts as a chaperone to prevent the harmful aggregation of alpha-hemoglobin during normal erythroid cell development. Specifically protects free alpha-hemoglobin from precipitation. This is Alpha-hemoglobin-stabilizing protein (Ahsp) from Mus musculus (Mouse).